Here is a 433-residue protein sequence, read N- to C-terminus: Sulfhydrylase FUB7 (433 aa).

N6-(pyridoxal phosphate)lysine is present on Lys211.

This sequence belongs to the trans-sulfuration enzymes family. Pyridoxal 5'-phosphate serves as cofactor.

It participates in mycotoxin biosynthesis. Its function is as follows. Sulfhydrylase; part of the gene cluster that mediates the biosynthesis of fusaric acid, a mycotoxin with low to moderate toxicity to animals and humans, but with high phytotoxic properties. L-aspartate is suggested as fusaric acid amino acid precursor that is activated and further processed to O-acetyl-L-homoserine by cluster enzymes aspartate kinase FUB3 and homoserine O-acetyltransferase FUB5, as well as enzymes of the primary metabolism. The polyketide synthase (PKS) FUB1 generates the triketide trans-2-hexenal which is presumptively released by the hydrolase FUB4 and linked to the NRPS-bound amino acid precursor by NAD(P)-dependent dehydrogenase FUB6. FUB1, FUB4, and the non-canonical NRPS Fub8 may form an enzyme complex. Further processing of the NRPS-bound intermediate might be carried out by FUB6 and the sulfhydrylase FUB7, enabling a spontaneous electrocyclization to close the carbon backbone of fusaric acid. Dihydrofusaric acid is likely to be released via reduction by the thioester reductase (TR) domain of FUB8 whereupon the final oxidation to fusaric acid may (also) be performed by the FMN-dependent dehydrogenase FUB9. This Fusarium oxysporum f. sp. lycopersici (strain 4287 / CBS 123668 / FGSC 9935 / NRRL 34936) (Fusarium vascular wilt of tomato) protein is Sulfhydrylase FUB7.